The chain runs to 118 residues: Large ribosomal subunit protein bL20 (118 aa).

It belongs to the bacterial ribosomal protein bL20 family.

Its function is as follows. Binds directly to 23S ribosomal RNA and is necessary for the in vitro assembly process of the 50S ribosomal subunit. It is not involved in the protein synthesizing functions of that subunit. The chain is Large ribosomal subunit protein bL20 (rplT) from Buchnera aphidicola subsp. Acyrthosiphon pisum (strain APS) (Acyrthosiphon pisum symbiotic bacterium).